Reading from the N-terminus, the 324-residue chain is dITP/XTP pyrophosphatase (324 aa).

Residues 1–126 (MTKSIFEYKD…SDNKSDFGDV (126 aa)) are unknown. The tract at residues 127-324 (LLIATRNEGK…EVFPAWQNKQ (198 aa)) is NTP pyrophosphatase. 131 to 136 (TRNEGK) serves as a coordination point for substrate. The active-site Proton acceptor is the aspartate 193. Mg(2+) is bound at residue aspartate 193. Residues serine 194, 277 to 280 (FGYD), lysine 300, and 305 to 306 (HR) each bind substrate.

It belongs to the HAM1 NTPase family. Homodimer. Mg(2+) serves as cofactor.

The enzyme catalyses XTP + H2O = XMP + diphosphate + H(+). The catalysed reaction is dITP + H2O = dIMP + diphosphate + H(+). It catalyses the reaction ITP + H2O = IMP + diphosphate + H(+). Pyrophosphatase that catalyzes the hydrolysis of nucleoside triphosphates to their monophosphate derivatives, with a high preference for the non-canonical purine nucleotides XTP (xanthosine triphosphate), dITP (deoxyinosine triphosphate) and ITP. Seems to function as a house-cleaning enzyme that removes non-canonical purine nucleotides from the nucleotide pool, thus preventing their incorporation into DNA/RNA and avoiding chromosomal lesions. This is dITP/XTP pyrophosphatase from Streptococcus thermophilus (strain CNRZ 1066).